A 568-amino-acid polypeptide reads, in one-letter code: Natural resistance-associated macrophage protein 2 (568 aa).

Residues 1–40 (MVLGPEQKMSDDSVSGDHGESASLGNINPAYSNPSLSQSP) form a disordered region. The Cytoplasmic segment spans residues 1-69 (MVLGPEQKMS…EEYSCFSFRK (69 aa)). Basic and acidic residues predominate over residues 8-20 (KMSDDSVSGDHGE). Residues 23-40 (SLGNINPAYSNPSLSQSP) show a composition bias toward polar residues. A helical transmembrane segment spans residues 70–90 (LWAFTGPGFLMSIAYLDPGNI). Residues 91–96 (ESDLQS) are Extracellular-facing. A helical membrane pass occupies residues 97 to 117 (GAVAGFKLLWILLLATLVGLL). Residues 118 to 154 (LQRLAARLGVVTGLHLAEVCHRQYPKVPRVILWLMVE) are Cytoplasmic-facing. A helical transmembrane segment spans residues 155–175 (LAIIGSDMQEVIGSAIAINLL). Topologically, residues 176–179 (SVGR) are extracellular. The chain crosses the membrane as a helical span at residues 180-200 (IPLWGGVLITIADTFVFLFLD). Over 201-208 (KYGLRKLE) the chain is Cytoplasmic. A helical transmembrane segment spans residues 209 to 229 (AFFGFLITIMALTFGYEYVTV). Over 230–255 (KPSQSQVLKGMFVPSCSGCRTPQIEQ) the chain is Extracellular. A helical membrane pass occupies residues 256-276 (AVGIVGAVIMPHNMYLHSALV). Residues 277-301 (KSRQVNRNNKQEVREANKYFFIESC) are Cytoplasmic-facing. The chain crosses the membrane as a helical span at residues 302–322 (IALFVSFIINVFVVSVFAEAF). Topologically, residues 323–360 (FGKTNEQVVEVCTNTSSPHAGLFPKDNSTLAVDIYKGG) are extracellular. Residues Asn336 and Asn349 are each glycosylated (N-linked (GlcNAc...) asparagine). A helical transmembrane segment spans residues 361 to 381 (VVLGCYFGPAALYIWAVGILA). At 382 to 408 (AGQSSTMTGTYSGQFVMEGFLNLKWSR) the chain is on the cytoplasmic side. The helical transmembrane segment at 409–429 (FARVVLTRSIAIIPTLLVAVF) threads the bilayer. The Extracellular portion of the chain corresponds to 430 to 440 (QDVEHLTGMND). A helical membrane pass occupies residues 441-461 (FLNVLQSLQLPFALIPILTFT). Topologically, residues 462 to 482 (SLRPVMSDFANGLGWRIAGGI) are cytoplasmic. The helical transmembrane segment at 483–503 (LVLIICSINMYFVVVYVRDLG) threads the bilayer. Residues 504–506 (HVA) are Extracellular-facing. A helical membrane pass occupies residues 507–527 (LYVVAAVVSVAYLGFVFYLGW). Over 528–568 (QCLIALGMSFLDCGHTCHLGLTAQPELYLLNTMDADSLVSR) the chain is Cytoplasmic. The required for early endosome targeting stretch occupies residues 555–559 (YLLNT). Ser564 and Ser567 each carry phosphoserine.

This sequence belongs to the NRAMP family. As to quaternary structure, forms a complex with NDFIP1 and NEDD4L, in cortical neurons, in response to iron and cobalt exposure; this interaction leads to SLC11A2 ubiquitination by NEDD4L and proteasome-dependent degradation. Interacts with NDFIP1, NDFIP2 and WWP2; this interaction leads to SLC11A2 ubiquitination by WWP2 and subsequent proteasome-dependent degradation. Interacts with COX2 and TOM6 at the outer mitochondrion membrane. Interacts with ARRDC1; this interaction regulates the incorporation of SLC11A2 into extracellular vesicles through an ubiquitination-dependent mechanism. Interacts with ARRDC4; controls the incorporation of SLC11A2 into extracellular vesicles through an ubiquitination-dependent mechanism. In terms of processing, ubiquitinated by WWP2. N-glycosylated. As to expression, ubiquitously expressed. Expressed in erythroid progenitors.

The protein resides in the early endosome membrane. It localises to the apical cell membrane. It is found in the late endosome membrane. Its subcellular location is the lysosome membrane. The protein localises to the cell membrane. The protein resides in the extracellular vesicle membrane. It localises to the mitochondrion outer membrane. It is found in the golgi apparatus. Its subcellular location is the trans-Golgi network membrane. The protein localises to the recycling endosome membrane. The enzyme catalyses Fe(2+)(in) + H(+)(in) = Fe(2+)(out) + H(+)(out). It catalyses the reaction Co(2+)(out) + H(+)(out) = Co(2+)(in) + H(+)(in). The catalysed reaction is Cd(2+)(out) + H(+)(out) = Cd(2+)(in) + H(+)(in). It carries out the reaction Mn(2+)(in) + H(+)(in) = Mn(2+)(out) + H(+)(out). The enzyme catalyses Zn(2+)(out) + H(+)(out) = Zn(2+)(in) + H(+)(in). It catalyses the reaction Ni(2+)(out) + H(+)(out) = Ni(2+)(in) + H(+)(in). The catalysed reaction is H(+)(in) = H(+)(out). It carries out the reaction Fe(2+)(in) = Fe(2+)(out). Functionally, proton-coupled metal ion symporter operating with a proton to metal ion stoichiometry of 1:1. Selectively transports various divalent metal cations, in decreasing affinity: Cd(2+) &gt; Fe(2+) &gt; Co(2+), Mn(2+) &gt;&gt; Zn(2+), Ni(2+), VO(2+). Essential for maintenance of iron homeostasis by modulating intestinal absorption of dietary Fe(2+) and TF-associated endosomal Fe(2+) transport in erythroid precursors and other cells. Enables Fe(2+) and Mn(2+) ion entry into mitochondria, and is thus expected to promote mitochondrial heme synthesis, iron-sulfur cluster biogenesis and antioxidant defense. Can mediate uncoupled fluxes of either protons or metal ions. The protein is Natural resistance-associated macrophage protein 2 (SLC11A2) of Homo sapiens (Human).